We begin with the raw amino-acid sequence, 65 residues long: Gallinacin-1 (65 aa).

Positions 1-19 (MRIVYLLLPFILLLAQGAA) are cleaved as a signal peptide. Positions 20-25 (GSSQAL) are excised as a propeptide. 3 cysteine pairs are disulfide-bonded: Cys31–Cys59, Cys38–Cys53, and Cys43–Cys60.

It belongs to the beta-defensin family. As to expression, strong expression in the bone marrow, lung, testis. Moderate expression in the bursa and intestine. Low expression in the cloaca, gall bladder, brain and pancreas. Expressed in the vagina, ovarian stroma and the theca and granulosa layers of the ovarian follicle.

It is found in the secreted. It localises to the cytoplasmic granule. Functionally, has bactericidal activity. Potent activity against E.coli ML-35, L.monocytogenes EGD and C.albicans. In Gallus gallus (Chicken), this protein is Gallinacin-1 (GAL1).